Consider the following 148-residue polypeptide: HTH-type transcriptional regulator Rv2324 (148 aa).

The HTH asnC-type domain occupies Leu-4–Asn-65. The H-T-H motif DNA-binding region spans Phe-23–Asp-42.

In terms of assembly, homodimer. Forms oligomers.

Its activity is regulated as follows. The DNA-binding activity of Rv2324 is modulated by interaction of Rv2324 with amino acids. Aspartate is the only effector amino acid that completely abolishes DNA binding. The majority of amino acids induce a dimer-tetramer or dimer-hexamer oligomeric transition. In response to amino-acid binding, adopts an open quaternary association, which is a part of the functional requirement to bind to non-symmetrically distributed target DNA binding sites. Transcriptional regulator involved in growth, DNA replication and damage control. Plays a crucial role in regulating survival and growth of M.tuberculosis. Could function as a global regulator in both the latent/persistent and active phases of growth. Binds to its own promoter region and to promoters of multiple metabolic genes, such as serB2, lat, ald and roc operon. In vitro, interacts with intrinsically curved and non-curved DNA molecules, and with both supercoiled and linear DNA, with higher affinity for supercoiled DNA. Binds to DNA recombination, replication and repair intermediates. The polypeptide is HTH-type transcriptional regulator Rv2324 (Mycobacterium tuberculosis (strain ATCC 25618 / H37Rv)).